Here is a 1168-residue protein sequence, read N- to C-terminus: Zinc finger CCHC domain-containing protein 2 (1168 aa).

Disordered regions lie at residues Met1–Ala87, Glu209–Leu242, Lys561–Glu693, and Ala932–Thr978. The segment covering Pro43 to Leu66 has biased composition (pro residues). Positions Glu67–Ala78 are enriched in low complexity. A compositionally biased stretch (acidic residues) spans Glu216 to Ala227. Residues Gly233–Leu242 are compositionally biased toward gly residues. Over residues Pro574–Leu588 the composition is skewed to basic and acidic residues. Low complexity predominate over residues Ser626–Ser635. The span at Pro636 to Asp655 shows a compositional bias: basic and acidic residues. Residues Ala932 to Val949 are compositionally biased toward polar residues. Over residues Pro951–Ser965 the composition is skewed to pro residues. Positions Pro966–Thr978 are enriched in polar residues. The CCHC-type zinc finger occupies Val1121 to Gln1138.

The protein is Zinc finger CCHC domain-containing protein 2 (Zcchc2) of Rattus norvegicus (Rat).